The chain runs to 589 residues: Transmembrane 9 superfamily member 1 (589 aa).

The N-terminal stretch at 1 to 27 (MTVLGHPRSWSCHCLPVLILLLGIGHG) is a signal peptide. N-linked (GlcNAc...) asparagine glycosylation is present at Asn-178. 4 helical membrane-spanning segments follow: residues 237–257 (LSII…AVIL), 310–330 (VLGV…MALL), 339–359 (GAIN…SGYV), and 373–393 (VWNI…TWSV). Residue Asn-401 is glycosylated (N-linked (GlcNAc...) asparagine). Helical transmembrane passes span 412 to 432 (ILLL…IGGI), 482 to 502 (GILF…SIAL), and 518 to 538 (SVLS…FYYA). The N-linked (GlcNAc...) asparagine glycan is linked to Asn-542. The chain crosses the membrane as a helical span at residues 552-572 (FFGYSLLTGYVFFLMLGTISF).

This sequence belongs to the nonaspanin (TM9SF) (TC 9.A.2) family.

It is found in the lysosome membrane. Its subcellular location is the cytoplasmic vesicle. It localises to the autophagosome membrane. Its function is as follows. Plays an essential role in autophagy. In Rattus norvegicus (Rat), this protein is Transmembrane 9 superfamily member 1 (Tm9sf1).